Consider the following 182-residue polypeptide: Negative transcriptional regulator PadR (182 aa).

This sequence belongs to the PadR family. As to quaternary structure, homodimer.

The protein resides in the cytoplasm. PadR repressor activity is inhibited in the presence of phenolic acids, which directly modulate PadR binding to the promoter of padC, leading to the dissociation of PadR from the operator DNA and expression of padC. In the presence of MgCl(2), binding is not altered by phenolic acids. Functionally, transcriptional regulator involved in the regulation of the metabolism of phenolic acids. In the absence of phenolic acids, represses the expression of padC, which encodes a phenolic acid decarboxylase (PAD) involved in the detoxification of harmful phenolic acids. Acts by binding to the padC promoter region, preventing the transcription of the gene. The polypeptide is Negative transcriptional regulator PadR (Bacillus subtilis (strain 168)).